The sequence spans 109 residues: Parvalbumin beta (109 aa).

Ser-1 bears the N-acetylserine mark. EF-hand domains are found at residues 38 to 73 and 77 to 109; these read KTPD…FASS and LTDK…VKEA. The Ca(2+) site is built by Asp-51, Asp-53, Ser-55, Phe-57, Glu-59, Glu-62, Asp-90, Asp-92, Asp-94, Lys-96, and Glu-101.

The protein belongs to the parvalbumin family.

Functionally, in muscle, parvalbumin is thought to be involved in relaxation after contraction. It binds two calcium ions. This chain is Parvalbumin beta, found in Opsanus tau (Oyster toadfish).